Consider the following 121-residue polypeptide: MIQMQTVLEVADNSGARKVMCIKVLGGSHRRYARVGDVIKVGVKDAIPRSKVKKGAVMRAVVVRTAQGVRRDDGSLIRFDDNAAVLLNNQNEPIGTRIFGPVTRELRERFMKIISLAAEVL.

It belongs to the universal ribosomal protein uL14 family. In terms of assembly, part of the 50S ribosomal subunit. Forms a cluster with proteins L3 and L19. In the 70S ribosome, L14 and L19 interact and together make contacts with the 16S rRNA in bridges B5 and B8.

Functionally, binds to 23S rRNA. Forms part of two intersubunit bridges in the 70S ribosome. This Legionella pneumophila (strain Corby) protein is Large ribosomal subunit protein uL14.